The chain runs to 421 residues: Glutamate-1-semialdehyde 2,1-aminomutase 1 (421 aa).

N6-(pyridoxal phosphate)lysine is present on Lys-258.

Belongs to the class-III pyridoxal-phosphate-dependent aminotransferase family. HemL subfamily. Pyridoxal 5'-phosphate is required as a cofactor.

The protein localises to the cytoplasm. It carries out the reaction (S)-4-amino-5-oxopentanoate = 5-aminolevulinate. It participates in porphyrin-containing compound metabolism; protoporphyrin-IX biosynthesis; 5-aminolevulinate from L-glutamyl-tRNA(Glu): step 2/2. The chain is Glutamate-1-semialdehyde 2,1-aminomutase 1 from Cenarchaeum symbiosum (strain A).